The following is a 168-amino-acid chain: RNA pyrophosphohydrolase (168 aa).

The region spanning 8 to 160 (PYRTCVGIAL…KRPVYERVAK (153 aa)) is the Nudix hydrolase domain. The short motif at 47 to 68 (GGVDPGEDAWEAAKRELYEETS) is the Nudix box element.

The protein belongs to the Nudix hydrolase family. RppH subfamily. The cofactor is a divalent metal cation.

Functionally, accelerates the degradation of transcripts by removing pyrophosphate from the 5'-end of triphosphorylated RNA, leading to a more labile monophosphorylated state that can stimulate subsequent ribonuclease cleavage. This Bradyrhizobium sp. (strain ORS 278) protein is RNA pyrophosphohydrolase.